The primary structure comprises 223 residues: Transcriptional regulatory protein PhoP (223 aa).

A Response regulatory domain is found at 2–116; it reads RVLVVEDNAL…EVMARMQALM (115 aa). Residue Asp-51 is modified to 4-aspartylphosphate. Positions 124–222 form a DNA-binding region, ompR/PhoB-type; it reads SQVISLPPFQ…VRGQGYLFEL (99 aa).

Monomer in the inactive, unphosphorylated state and dimer in the active, phosphorylated state. Post-translationally, phosphorylated by PhoQ.

It is found in the cytoplasm. With respect to regulation, feedback inhibited by MgrB, which seems to bind PhoQ, altering its activity and that of downstream effector PhoP. PhoP-regulated transcription is redox-sensitive, being activated when the periplasm becomes more reducing (deletion of dsbA/dsbB, or treatment with dithiothreitol). MgrB acts between DsbA/DsbB and PhoP/PhoQ in this pathway. In terms of biological role, member of the two-component regulatory system PhoP/PhoQ involved in adaptation to low Mg(2+) environments and the control of acid resistance genes. In low periplasmic Mg(2+), PhoQ phosphorylates PhoP, resulting in the expression of PhoP-activated genes (PAG) and repression of PhoP-repressed genes (PRG). In high periplasmic Mg(2+), PhoQ dephosphorylates phospho-PhoP, resulting in the repression of PAG and may lead to expression of some PRG. Mediates magnesium influx to the cytosol by activation of MgtA. Promotes expression of the two-component regulatory system rstA/rstB and transcription of the hemL, mgrB, nagA, slyB, vboR and yrbL genes. This Escherichia coli (strain K12) protein is Transcriptional regulatory protein PhoP (phoP).